We begin with the raw amino-acid sequence, 259 residues long: Ribosomal RNA small subunit methyltransferase J (259 aa).

S-adenosyl-L-methionine contacts are provided by residues 101–102 (RD), 117–118 (ER), 153–154 (SS), and aspartate 176.

The protein belongs to the methyltransferase superfamily. RsmJ family.

Its subcellular location is the cytoplasm. The catalysed reaction is guanosine(1516) in 16S rRNA + S-adenosyl-L-methionine = N(2)-methylguanosine(1516) in 16S rRNA + S-adenosyl-L-homocysteine + H(+). Specifically methylates the guanosine in position 1516 of 16S rRNA. The protein is Ribosomal RNA small subunit methyltransferase J of Vibrio parahaemolyticus serotype O3:K6 (strain RIMD 2210633).